We begin with the raw amino-acid sequence, 118 residues long: Large ribosomal subunit protein bL19 (118 aa).

The protein belongs to the bacterial ribosomal protein bL19 family.

In terms of biological role, this protein is located at the 30S-50S ribosomal subunit interface and may play a role in the structure and function of the aminoacyl-tRNA binding site. The polypeptide is Large ribosomal subunit protein bL19 (Helicobacter pylori (strain G27)).